Reading from the N-terminus, the 169-residue chain is ATP synthase subunit b (169 aa).

Residues Phe26–Pro46 form a helical membrane-spanning segment.

It belongs to the ATPase B chain family. F-type ATPases have 2 components, F(1) - the catalytic core - and F(0) - the membrane proton channel. F(1) has five subunits: alpha(3), beta(3), gamma(1), delta(1), epsilon(1). F(0) has three main subunits: a(1), b(2) and c(10-14). The alpha and beta chains form an alternating ring which encloses part of the gamma chain. F(1) is attached to F(0) by a central stalk formed by the gamma and epsilon chains, while a peripheral stalk is formed by the delta and b chains.

It is found in the cell membrane. Functionally, f(1)F(0) ATP synthase produces ATP from ADP in the presence of a proton or sodium gradient. F-type ATPases consist of two structural domains, F(1) containing the extramembraneous catalytic core and F(0) containing the membrane proton channel, linked together by a central stalk and a peripheral stalk. During catalysis, ATP synthesis in the catalytic domain of F(1) is coupled via a rotary mechanism of the central stalk subunits to proton translocation. Its function is as follows. Component of the F(0) channel, it forms part of the peripheral stalk, linking F(1) to F(0). In Mycobacterium sp. (strain JLS), this protein is ATP synthase subunit b.